Here is a 242-residue protein sequence, read N- to C-terminus: Small ribosomal subunit protein uS2 (242 aa).

This sequence belongs to the universal ribosomal protein uS2 family.

The polypeptide is Small ribosomal subunit protein uS2 (Shewanella oneidensis (strain ATCC 700550 / JCM 31522 / CIP 106686 / LMG 19005 / NCIMB 14063 / MR-1)).